The following is a 454-amino-acid chain: Cobyrinate a,c-diamide synthase (454 aa).

One can recognise a GATase cobBQ-type domain in the interval 247 to 442 (KIGIAMDSAF…IHAHWASNPN (196 aa)). C329 (nucleophile) is an active-site residue.

Belongs to the CobB/CbiA family. Mg(2+) is required as a cofactor.

The catalysed reaction is cob(II)yrinate + 2 L-glutamine + 2 ATP + 2 H2O = cob(II)yrinate a,c diamide + 2 L-glutamate + 2 ADP + 2 phosphate + 2 H(+). The protein operates within cofactor biosynthesis; adenosylcobalamin biosynthesis; cob(II)yrinate a,c-diamide from sirohydrochlorin (anaerobic route): step 10/10. Functionally, catalyzes the ATP-dependent amidation of the two carboxylate groups at positions a and c of cobyrinate, using either L-glutamine or ammonia as the nitrogen source. The chain is Cobyrinate a,c-diamide synthase from Leptospira interrogans serogroup Icterohaemorrhagiae serovar copenhageni (strain Fiocruz L1-130).